Reading from the N-terminus, the 259-residue chain is Glandular kallikrein-10 (259 aa).

The first 18 residues, 1–18 (MWFLILFLALSLGGIDAA), serve as a signal peptide directing secretion. The propeptide at 19-24 (PPGQSR) is activation peptide. Residues 25–256 (IVGGYKCEKN…FTSWIKEVMK (232 aa)) enclose the Peptidase S1 domain. Cystine bridges form between Cys31-Cys171, Cys48-Cys64, Cys150-Cys217, Cys182-Cys196, and Cys207-Cys232. His63 functions as the Charge relay system in the catalytic mechanism. 2 N-linked (GlcNAc...) asparagine glycosylation sites follow: Asn91 and Asn106. Asp118 acts as the Charge relay system in catalysis. The Charge relay system role is filled by Ser211.

The protein belongs to the peptidase S1 family. Kallikrein subfamily. In terms of assembly, heterodimer of a light chain and heavy chain linked by a disulfide bond. In terms of processing, probably N- and O-glycosylated. Kidney and submandibular gland, where it is found in the granular convoluted tubule and striated duct cells. It is likely that the enzyme is mainly synthesized in the granular convoluted tubules and then transferred to other tissues by release into the vasculature or interstitial space.

The catalysed reaction is Preferential cleavage of Arg-|-Xaa bonds in small molecule substrates. Highly selective action to release kallidin (lysyl-bradykinin) from kininogen involves hydrolysis of Met-|-Xaa or Leu-|-Xaa.. Glandular kallikreins cleave Met-Lys and Arg-Ser bonds in kininogen to release Lys-bradykinin. This protein may be involved in the regulation of renal function. This Rattus norvegicus (Rat) protein is Glandular kallikrein-10 (Klk10).